Here is a 305-residue protein sequence, read N- to C-terminus: NAD-dependent protein deacylase SIR4 (305 aa).

The N-terminal 10 residues, 1–10 (MSAQVMHNRV), are a transit peptide targeting the mitochondrion. The 295-residue stretch at 11–305 (MGTVKDSASK…VLEELASTIR (295 aa)) folds into the Deacetylase sirtuin-type domain. NAD(+) contacts are provided by residues 37–57 (GAGV…GIYS) and 118–121 (QNVD). The Proton acceptor role is filled by His139. Positions 147, 150, 209, and 212 each coordinate Zn(2+). Residues 249–251 (GSS), 275–277 (NLG), and Ser293 each bind NAD(+).

It belongs to the sirtuin family. Class II subfamily. Zn(2+) serves as cofactor.

The protein localises to the mitochondrion matrix. It carries out the reaction N(6)-acetyl-L-lysyl-[protein] + NAD(+) + H2O = 2''-O-acetyl-ADP-D-ribose + nicotinamide + L-lysyl-[protein]. Its function is as follows. NAD-dependent protein deacylase. Catalyzes the NAD-dependent hydrolysis of acyl groups from lysine residues. In Batrachochytrium dendrobatidis (strain JAM81 / FGSC 10211) (Frog chytrid fungus), this protein is NAD-dependent protein deacylase SIR4.